We begin with the raw amino-acid sequence, 463 residues long: Putative ankyrin repeat protein R579 (463 aa).

ANK repeat units lie at residues 124 to 154 (LKTD…KCTI), 156 to 181 (SITR…SENI), 242 to 271 (KEKN…QFNP), 273 to 299 (IYLW…DYRP), 300 to 328 (HIDR…VSQE), 329 to 355 (NINE…MGAD), 356 to 385 (INYK…DITT), and 387 to 416 (GSND…TITL).

The chain is Putative ankyrin repeat protein R579 from Acanthamoeba polyphaga (Amoeba).